The following is a 481-amino-acid chain: MLPVVALVGRPNVGKSTLFNRLTNTRDALVADYPGLTRDRKYGQAKFEKRQFIVVDTGGITGDEEGIDAEMAQQSLLAIEEADVVLFLVDARAGLLPADQGIADHLRRINKQIFVVANKVDGIDGDSESAEFYSLGLGAIKQIAAAHGRGVSQLLQDALKPLESDFPDMEIIDEAPEEEEDAESQRQRLQELPIKLAIVGKPNVGKSTLTNRILGEERVVVYDMPGTTRDSVYIPMERDEREYILIDTAGVRKRKKISEAVEKFSIVKTLQAIEEANVVLLVIDAREGITDQDLSLLGFVLNSGRSLVVAVNKWDGLSTDIKDDIKREMDRRLGFIDFARIHFISALHGSGVGNLFESVQEAYMSATKRINTALLTQIMEMAQDDHQPPLVRGRRVKMKYAHAGGYNPPVIVIHGNQVDDLPSSYKRFLMNYFRKALEIMGTPIKIEFREGNNPFEGKKNNLTLAQQRKRRRMMSYYKEKK.

2 EngA-type G domains span residues 3-166 and 194-367; these read PVVA…ESDF and IKLA…MSAT. GTP contacts are provided by residues 9 to 16, 56 to 60, 118 to 121, 200 to 207, 247 to 251, and 312 to 315; these read GRPNVGKS, DTGGI, NKVD, GKPNVGKS, DTAGV, and NKWD. In terms of domain architecture, KH-like spans 368–452; sequence KRINTALLTQ…PIKIEFREGN (85 aa).

The protein belongs to the TRAFAC class TrmE-Era-EngA-EngB-Septin-like GTPase superfamily. EngA (Der) GTPase family. As to quaternary structure, associates with the 50S ribosomal subunit.

Its function is as follows. GTPase that plays an essential role in the late steps of ribosome biogenesis. The polypeptide is GTPase Der (Alteromonas mediterranea (strain DSM 17117 / CIP 110805 / LMG 28347 / Deep ecotype)).